We begin with the raw amino-acid sequence, 496 residues long: Glycerol kinase (496 aa).

Position 12 (Thr-12) interacts with ADP. ATP is bound by residues Thr-12, Thr-13, and Ser-14. Thr-12 contributes to the sn-glycerol 3-phosphate binding site. Arg-16 provides a ligand contact to ADP. Residues Arg-82, Glu-83, and Tyr-134 each contribute to the sn-glycerol 3-phosphate site. Arg-82, Glu-83, and Tyr-134 together coordinate glycerol. His-230 bears the Phosphohistidine; by HPr mark. A sn-glycerol 3-phosphate-binding site is contributed by Asp-244. Residues Asp-244 and Gln-245 each coordinate glycerol. Positions 266 and 309 each coordinate ADP. ATP is bound by residues Thr-266, Gly-309, Gln-313, and Gly-410. ADP-binding residues include Gly-410 and Asn-414.

It belongs to the FGGY kinase family. In terms of assembly, homotetramer and homodimer (in equilibrium). In terms of processing, the phosphoenolpyruvate-dependent sugar phosphotransferase system (PTS), including enzyme I, and histidine-containing protein (HPr) are required for the phosphorylation, which leads to the activation of the enzyme.

It catalyses the reaction glycerol + ATP = sn-glycerol 3-phosphate + ADP + H(+). Its pathway is polyol metabolism; glycerol degradation via glycerol kinase pathway; sn-glycerol 3-phosphate from glycerol: step 1/1. Its activity is regulated as follows. Activated by phosphorylation and inhibited by fructose 1,6-bisphosphate (FBP). Key enzyme in the regulation of glycerol uptake and metabolism. Catalyzes the phosphorylation of glycerol to yield sn-glycerol 3-phosphate. The sequence is that of Glycerol kinase from Bacillus subtilis (strain 168).